Reading from the N-terminus, the 384-residue chain is Urea transporter 1 (384 aa).

Residues 1–23 (MDDNPTAVKLDQGGNQAPQGQGR) form a disordered region. Helical transmembrane passes span 61 to 81 (ISQV…VGLL), 85 to 105 (PWCA…ALLL), 111 to 131 (AITA…MAIY), 138 to 158 (FWWL…FSSA), and 169 to 189 (PVFT…TGHF). A glycan (N-linked (GlcNAc...) asparagine) is linked at asparagine 206. The next 3 helical transmembrane spans lie at 237-257 (GGIF…HAAI), 279-299 (GLWG…FMAL), and 327-347 (VVGL…FLLL).

It belongs to the urea transporter family. In terms of assembly, homotrimer; each subunit contains a pore through which urea permeates. Identified in a complex with STOM.

It is found in the cell membrane. Its subcellular location is the basolateral cell membrane. It carries out the reaction urea(in) = urea(out). Mediates the transport of urea driven by a concentration gradient across the cell membranes of erythrocytes and the renal inner medullary collecting duct which is critical to the urinary concentrating mechanism. Facilitates water transport in erythrocytes. In Ovis aries (Sheep), this protein is Urea transporter 1 (SLC14A1).